The following is a 316-amino-acid chain: Beta-ketoacyl-[acyl-carrier-protein] synthase III (316 aa).

Catalysis depends on residues Cys112 and His243. Residues 244 to 248 form an ACP-binding region; that stretch reads QANIR. The active site involves Asn273.

It belongs to the thiolase-like superfamily. FabH family. In terms of assembly, homodimer.

The protein resides in the cytoplasm. The enzyme catalyses malonyl-[ACP] + acetyl-CoA + H(+) = 3-oxobutanoyl-[ACP] + CO2 + CoA. It functions in the pathway lipid metabolism; fatty acid biosynthesis. Catalyzes the condensation reaction of fatty acid synthesis by the addition to an acyl acceptor of two carbons from malonyl-ACP. Catalyzes the first condensation reaction which initiates fatty acid synthesis and may therefore play a role in governing the total rate of fatty acid production. Possesses both acetoacetyl-ACP synthase and acetyl transacylase activities. Its substrate specificity determines the biosynthesis of branched-chain and/or straight-chain of fatty acids. This is Beta-ketoacyl-[acyl-carrier-protein] synthase III from Haemophilus ducreyi (strain 35000HP / ATCC 700724).